Consider the following 396-residue polypeptide: L-lactate dehydrogenase (396 aa).

The region spanning 1 to 380 (MIISAASDYR…SGDSLVQELG (380 aa)) is the FMN hydroxy acid dehydrogenase domain. Tyr24 contacts substrate. 2 residues coordinate FMN: Ser106 and Gln127. Tyr129 is a binding site for substrate. Thr155 serves as a coordination point for FMN. Residue Arg164 participates in substrate binding. FMN is bound at residue Lys251. Catalysis depends on His275, which acts as the Proton acceptor. Arg278 contributes to the substrate binding site. 306-330 (DSGIRNGLDVVRMIALGADTVLLGR) provides a ligand contact to FMN.

This sequence belongs to the FMN-dependent alpha-hydroxy acid dehydrogenase family. FMN serves as cofactor.

The protein resides in the cell inner membrane. It catalyses the reaction (S)-lactate + A = pyruvate + AH2. Its function is as follows. Catalyzes the conversion of L-lactate to pyruvate. Is coupled to the respiratory chain. The sequence is that of L-lactate dehydrogenase from Salmonella newport (strain SL254).